The primary structure comprises 461 residues: Coronin-1A (461 aa).

The residue at position 2 (serine 2) is an N-acetylserine. Serine 2 bears the Phosphoserine; by PKC mark. 7 WD repeats span residues 13-63 (HVFG…LVLP), 73-110 (NVPM…MVWE), 123-160 (PVVT…LVWD), 164-204 (GVAV…RIIE), 207-251 (KGTI…ALWD), 258-296 (PLSL…RYFE), and 302-349 (PFLH…EPIA). The span at 404–418 (LRVNRGLDTGRKRTT) shows a compositional bias: basic and acidic residues. A disordered region spans residues 404 to 429 (LRVNRGLDTGRKRTTPEASGAPSSDA). Phosphothreonine; by PKC is present on threonine 412. Threonine 418 carries the post-translational modification Phosphothreonine. A Phosphoserine modification is found at serine 422. The stretch at 424–460 (APSSDAISRLEEEMRKLQATVQELQKRLDRLEETVQA) forms a coiled coil. Lysine 449 carries the post-translational modification N6-acetyllysine.

It belongs to the WD repeat coronin family. In terms of assembly, binds actin. Post-translationally, phosphorylation at Thr-412 by PKC strongly down-regulates the association with actin. In terms of processing, polyubiquitinated by RNF128 with 'Lys-48'-linked chains, leading to proteasomal degradation. In terms of tissue distribution, expressed in brain, thymus, spleen, bone marrow and lymph node. Low in lung and gut.

The protein resides in the cytoplasm. Its subcellular location is the cytoskeleton. It localises to the cell cortex. It is found in the cytoplasmic vesicle. The protein localises to the phagosome membrane. In terms of biological role, may be a crucial component of the cytoskeleton of highly motile cells, functioning both in the invagination of large pieces of plasma membrane, as well as in forming protrusions of the plasma membrane involved in cell locomotion. In mycobacteria-infected macrophages, its retention on the phagosomal membrane prevents fusion between phagosomes and lysosomes. The protein is Coronin-1A (CORO1A) of Bos taurus (Bovine).